The following is a 523-amino-acid chain: 2-isopropylmalate synthase (523 aa).

A Pyruvate carboxyltransferase domain is found at 5 to 267 (VVIFDTTLRD…QTRINHNEIW (263 aa)). Positions 14, 202, 204, and 238 each coordinate Mn(2+). The regulatory domain stretch occupies residues 392–523 (RMDYFSVQSG…QNKENNKETV (132 aa)).

The protein belongs to the alpha-IPM synthase/homocitrate synthase family. LeuA type 1 subfamily. As to quaternary structure, homodimer. Mn(2+) serves as cofactor.

The protein resides in the cytoplasm. The catalysed reaction is 3-methyl-2-oxobutanoate + acetyl-CoA + H2O = (2S)-2-isopropylmalate + CoA + H(+). It functions in the pathway amino-acid biosynthesis; L-leucine biosynthesis; L-leucine from 3-methyl-2-oxobutanoate: step 1/4. Catalyzes the condensation of the acetyl group of acetyl-CoA with 3-methyl-2-oxobutanoate (2-ketoisovalerate) to form 3-carboxy-3-hydroxy-4-methylpentanoate (2-isopropylmalate). This chain is 2-isopropylmalate synthase, found in Enterobacter sp. (strain 638).